A 111-amino-acid polypeptide reads, in one-letter code: uncharacterized protein (111 aa).

The protein resides in the cytoplasm. Its subcellular location is the nucleus. This is an uncharacterized protein from Saccharomyces cerevisiae (strain ATCC 204508 / S288c) (Baker's yeast).